The primary structure comprises 138 residues: Cysteine desulfuration protein SufE (138 aa).

The active-site Cysteine persulfide intermediate is Cys51.

This sequence belongs to the SufE family. In terms of assembly, homodimer. Interacts with SufS.

Its subcellular location is the cytoplasm. Its pathway is cofactor biosynthesis; iron-sulfur cluster biosynthesis. Its function is as follows. Participates in cysteine desulfuration mediated by SufS. Cysteine desulfuration mobilizes sulfur from L-cysteine to yield L-alanine and constitutes an essential step in sulfur metabolism for biosynthesis of a variety of sulfur-containing biomolecules. Functions as a sulfur acceptor for SufS, by mediating the direct transfer of the sulfur atom from the S-sulfanylcysteine of SufS, an intermediate product of cysteine desulfuration process. The protein is Cysteine desulfuration protein SufE of Salmonella choleraesuis (strain SC-B67).